The sequence spans 147 residues: UPF0306 protein YhbP (147 aa).

It belongs to the UPF0306 family.

This is UPF0306 protein YhbP from Shigella sonnei (strain Ss046).